The following is a 95-amino-acid chain: Co-chaperonin GroES (95 aa).

This sequence belongs to the GroES chaperonin family. As to quaternary structure, heptamer of 7 subunits arranged in a ring. Interacts with the chaperonin GroEL.

It localises to the cytoplasm. Its function is as follows. Together with the chaperonin GroEL, plays an essential role in assisting protein folding. The GroEL-GroES system forms a nano-cage that allows encapsulation of the non-native substrate proteins and provides a physical environment optimized to promote and accelerate protein folding. GroES binds to the apical surface of the GroEL ring, thereby capping the opening of the GroEL channel. The chain is Co-chaperonin GroES from Marinobacter nauticus (strain ATCC 700491 / DSM 11845 / VT8) (Marinobacter aquaeolei).